The chain runs to 457 residues: Probable ATP-dependent RNA helicase DDX47 (457 aa).

An N-acetylalanine modification is found at Ala-2. At Ser-9 the chain carries Phosphoserine. A Q motif motif is present at residues 26 to 54 (KTFKDLGVTDVLCEACDQLGWTKPTKIQI). The 172-residue stretch at 57-228 (IPLALQGRDI…RAALKNPVKC (172 aa)) folds into the Helicase ATP-binding domain. 70–77 (AETGSGKT) contacts ATP. A Phosphothreonine modification is found at Thr-151. A DEAD box motif is present at residues 176 to 179 (DEAD). The region spanning 239-399 (KLQQYYLFIP…VFPTQDDEVM (161 aa)) is the Helicase C-terminal domain. Basic and acidic residues predominate over residues 415-430 (ELREHGEKKKRSREDV). A disordered region spans residues 415-457 (ELREHGEKKKRSREDVGDNDDTEGAIGVRNKVAGGKMKKRKGR). Ser-426 carries the phosphoserine modification.

This sequence belongs to the DEAD box helicase family. DDX47/RRP3 subfamily. Interacts with AGO1 and AGO2. Interacts with GABARAP. Interacts with NOL8; the interaction is RNA-dependent.

It is found in the nucleus. It localises to the nucleolus. It catalyses the reaction ATP + H2O = ADP + phosphate + H(+). Its function is as follows. Involved in apoptosis. May have a role in rRNA processing and mRNA splicing. Associates with pre-rRNA precursors. The sequence is that of Probable ATP-dependent RNA helicase DDX47 (DDX47) from Bos taurus (Bovine).